Reading from the N-terminus, the 502-residue chain is NAD(P)H-quinone oxidoreductase chain 4, chloroplastic (502 aa).

The next 14 membrane-spanning stretches (helical) occupy residues F4–L24, I37–L57, L87–V107, L113–S130, L134–M154, F167–L187, I213–H233, H244–I264, A274–A294, M315–L335, Q336–D356, L388–T408, L419–L439, and L464–V484.

Belongs to the complex I subunit 4 family.

It localises to the plastid. The protein localises to the chloroplast thylakoid membrane. It catalyses the reaction a plastoquinone + NADH + (n+1) H(+)(in) = a plastoquinol + NAD(+) + n H(+)(out). The catalysed reaction is a plastoquinone + NADPH + (n+1) H(+)(in) = a plastoquinol + NADP(+) + n H(+)(out). This chain is NAD(P)H-quinone oxidoreductase chain 4, chloroplastic, found in Lolium perenne (Perennial ryegrass).